The chain runs to 350 residues: Streptomycin biosynthesis operon possible regulatory protein (350 aa).

The segment covering 1-10 (MEHISGNSPE) has biased composition (polar residues). Disordered stretches follow at residues 1–20 (MEHI…AAVT), 168–189 (AGVP…LDPT), and 211–258 (AAQA…SRAD). 2 stretches are compositionally biased toward basic and acidic residues: residues 177–189 (IGRD…LDPT) and 223–242 (DVRK…DRQQ).

The polypeptide is Streptomycin biosynthesis operon possible regulatory protein (strR) (Streptomyces griseus).